The primary structure comprises 430 residues: Adenylosuccinate synthetase (430 aa).

Residues 12 to 18 and 40 to 42 each bind GTP; these read GDEGKGK and GHT. The Proton acceptor role is filled by Asp-13. The Mg(2+) site is built by Asp-13 and Gly-40. IMP is bound by residues 13 to 16, 38 to 41, Thr-130, Arg-144, Gln-224, Thr-239, and Arg-303; these read DEGK and NAGH. His-41 acts as the Proton donor in catalysis. 299–305 is a binding site for substrate; the sequence is VNTGRKR. GTP is bound by residues Arg-305, 331 to 333, and 413 to 415; these read KLD and STS.

This sequence belongs to the adenylosuccinate synthetase family. Homodimer. It depends on Mg(2+) as a cofactor.

The protein localises to the cytoplasm. It carries out the reaction IMP + L-aspartate + GTP = N(6)-(1,2-dicarboxyethyl)-AMP + GDP + phosphate + 2 H(+). It functions in the pathway purine metabolism; AMP biosynthesis via de novo pathway; AMP from IMP: step 1/2. Its function is as follows. Plays an important role in the de novo pathway of purine nucleotide biosynthesis. Catalyzes the first committed step in the biosynthesis of AMP from IMP. In Rhodopseudomonas palustris (strain ATCC BAA-98 / CGA009), this protein is Adenylosuccinate synthetase.